We begin with the raw amino-acid sequence, 296 residues long: MPSLKDLRNRITSVKATQKITKAMQMVAAAKLRRAQNAAENGRPYAERMAQVLGNLAGNLIGGVGAPRLLSGTGQDRVHLLVVCTGDRGLAGAFNSSIARLARDHANRLMADGKTVKIITIGKKGLDVLRRQFRDQIIASRDIRGNKPVDYPFAAEIADDILARFEAGEFDVATLFYSEFRSVISQIPTAQKLIPAELPTAEGASATGAGSDAAMEFEPNEETILETLLPKNLTVQIFRALLENAASEQGARMSAMDSATRNAGEMIKKQTLIYNRTRQAMITKELIEIISGAEAL.

Belongs to the ATPase gamma chain family. In terms of assembly, F-type ATPases have 2 components, CF(1) - the catalytic core - and CF(0) - the membrane proton channel. CF(1) has five subunits: alpha(3), beta(3), gamma(1), delta(1), epsilon(1). CF(0) has three main subunits: a, b and c.

It is found in the cell inner membrane. Produces ATP from ADP in the presence of a proton gradient across the membrane. The gamma chain is believed to be important in regulating ATPase activity and the flow of protons through the CF(0) complex. This is ATP synthase gamma chain from Methylorubrum extorquens (strain CM4 / NCIMB 13688) (Methylobacterium extorquens).